Here is a 408-residue protein sequence, read N- to C-terminus: Phosphoglycerate kinase (408 aa).

Substrate is bound by residues 24 to 26 (DLN), R39, 62 to 65 (HLGR), R121, and R161. Residues K211, G307, E338, and 364–367 (GGDS) each bind ATP.

The protein belongs to the phosphoglycerate kinase family. Monomer.

It is found in the cytoplasm. The catalysed reaction is (2R)-3-phosphoglycerate + ATP = (2R)-3-phospho-glyceroyl phosphate + ADP. It participates in carbohydrate degradation; glycolysis; pyruvate from D-glyceraldehyde 3-phosphate: step 2/5. The polypeptide is Phosphoglycerate kinase (Pseudarthrobacter chlorophenolicus (strain ATCC 700700 / DSM 12829 / CIP 107037 / JCM 12360 / KCTC 9906 / NCIMB 13794 / A6) (Arthrobacter chlorophenolicus)).